Reading from the N-terminus, the 267-residue chain is 4-hydroxy-tetrahydrodipicolinate reductase (267 aa).

Residues 12-17, Asp38, 100-102, and 126-129 each bind NAD(+); these read GARGRM, GTT, and APNF. Residue His156 is the Proton donor/acceptor of the active site. His157 contacts (S)-2,3,4,5-tetrahydrodipicolinate. Lys160 functions as the Proton donor in the catalytic mechanism. Residue 166 to 167 coordinates (S)-2,3,4,5-tetrahydrodipicolinate; the sequence is GT.

It belongs to the DapB family.

The protein resides in the cytoplasm. It catalyses the reaction (S)-2,3,4,5-tetrahydrodipicolinate + NAD(+) + H2O = (2S,4S)-4-hydroxy-2,3,4,5-tetrahydrodipicolinate + NADH + H(+). The enzyme catalyses (S)-2,3,4,5-tetrahydrodipicolinate + NADP(+) + H2O = (2S,4S)-4-hydroxy-2,3,4,5-tetrahydrodipicolinate + NADPH + H(+). It participates in amino-acid biosynthesis; L-lysine biosynthesis via DAP pathway; (S)-tetrahydrodipicolinate from L-aspartate: step 4/4. Functionally, catalyzes the conversion of 4-hydroxy-tetrahydrodipicolinate (HTPA) to tetrahydrodipicolinate. This Bacillus pumilus (strain SAFR-032) protein is 4-hydroxy-tetrahydrodipicolinate reductase.